A 1144-amino-acid chain; its full sequence is MACPWKFLFKVKSYQSDLKEEKDINNNVKKTPCAVLSPTIQDDPKSHQNGSPQLLTGTAQNVPESLDKLHVTSTRPQYVRIKNWGSGEILHDTLHHKATSDFTCKSKSCLGSIMNPKSLTRGPRDKPTPLEELLPHAIEFINQYYGSFKEAKIEEHLARLEAVTKEIETTGTYQLTLDELIFATKMAWRNAPRCIGRIQWSNLQVFDARNCSTAQEMFQHICRHILYATNNGNIRSAITVFPQRSDGKHDFRLWNSQLIRYAGYQMPDGTIRGDAATLEFTQLCIDLGWKPRYGRFDVLPLVLQADGQDPEVFEIPPDLVLEVTMEHPKYEWFQELGLKWYALPAVANMLLEVGGLEFPACPFNGWYMGTEIGVRDFCDTQRYNILEEVGRRMGLETHTLASLWKDRAVTEINVAVLHSFQKQNVTIMDHHTASESFMKHMQNEYRARGGCPADWIWLVPPVSGSITPVFHQEMLNYVLSPFYYYQIEPWKTHIWQNEKLRPRRREIRFRVLVKVVFFASMLMRKVMASRVRATVLFATETGKSEALARDLATLFSYAFNTKVVCMDQYKASTLEEEQLLLVVTSTFGNGDCPSNGQTLKKSLFMLRELNHTFRYAVFGLGSSMYPQFCAFAHDIDQKLSHLGASQLAPTGEGDELSGQEDAFRSWAVQTFRAACETFDVRSKHHIQIPKRFTSNATWEPQQYRLIQSPEPLDLNRALSSIHAKNVFTMRLKSQQNLQSEKSSRTTLLVQLTFEGSRGPSYLPGEHLGIFPGNQTALVQGILERVVDCPTPHQTVCLEVLDESGSYWVKDKRLPPCSLSQALTYFLDITTPPTQLQLHKLARFATDETDRQRLEALCQPSEYNDWKFSNNPTFLEVLEEFPSLHVPAAFLLSQLPILKPRYYSISSSQDHTPSEVHLTVAVVTYRTRDGQGPLHHGVCSTWIRNLKPQDPVPCFVRSVSGFQLPEDPSQPCILIGPGTGIAPFRSFWQQRLHDSQHKGLKGGRMSLVFGCRHPEEDHLYQEEMQEMVRKRVLFQVHTGYSRLPGKPKVYVQDILQKQLANEVLSVLHGEQGHLYICGDVRMARDVATTLKKLVATKLNLSEEQVEDYFFQLKSQKRYHEDIFGAVFSYGAKKGSALEEPKATRL.

The short motif at 23 to 27 (DINNN) is the DINNN-motif; mediates interaction with SPSB1, SPSB2 and SPSB4 element. The interval 37 to 59 (SPTIQDDPKSHQNGSPQLLTGTA) is disordered. Positions 47-59 (HQNGSPQLLTGTA) are enriched in polar residues. Zn(2+) contacts are provided by cysteine 104 and cysteine 109. (6R)-L-erythro-5,6,7,8-tetrahydrobiopterin is bound at residue serine 112. A heme b-binding site is contributed by cysteine 194. The L-arginine site is built by glutamine 257, tryptophan 366, tyrosine 367, and glutamate 371. Residues arginine 375, isoleucine 456, tryptophan 457, and phenylalanine 470 each contribute to the (6R)-L-erythro-5,6,7,8-tetrahydrobiopterin site. Residue tyrosine 485 participates in heme b binding. The tract at residues 509-529 (FRVLVKVVFFASMLMRKVMAS) is calmodulin-binding. The Flavodoxin-like domain occupies 533–671 (ATVLFATETG…AFRSWAVQTF (139 aa)). 5 residues coordinate FMN: threonine 539, glutamate 540, threonine 541, lysine 543, and serine 544. Phosphotyrosine is present on tyrosine 569. FMN-binding residues include serine 585, threonine 586, serine 622, cysteine 629, glutamate 655, and glutamine 659. An FAD-binding FR-type domain is found at 724–964 (KNVFTMRLKS…VRSVSGFQLP (241 aa)). Arginine 744 contacts NADP(+). Residues histidine 766, arginine 900, tyrosine 902, serine 903, threonine 918, and alanine 920 each coordinate FAD. Threonine 923 serves as a coordination point for NADP(+). Positions 924, 937, 938, and 939 each coordinate FAD. Positions 978, 1011, 1040, 1041, 1047, 1049, 1051, and 1084 each coordinate NADP(+).

It belongs to the NOS family. Homodimer. Interacts with NHERF1. Interacts with GAPDH. Interacts with S100A8 and S100A9 to form the iNOS-S100A8/9 transnitrosylase complex. Interacts with SPSB1, SPSB2 and SPSB4. Interacts with ELOC and CUL5 in the presence of SPSB1 or SPSB2 or SPSB4. Forms a complex with ASL, ASS1 and HSP90AA1; the complex regulates cell-autonomous L-arginine synthesis and citrulline recycling while channeling extracellular L-arginine to nitric oxide synthesis pathway. Heme b is required as a cofactor. It depends on FAD as a cofactor. Requires FMN as cofactor. (6R)-L-erythro-5,6,7,8-tetrahydrobiopterin serves as cofactor. Post-translationally, polyubiquitinated; mediated by SPSB1, SPSB2 and SPSB4, leading to proteasomal degradation. Macrophages.

It is found in the cytoplasm. The protein resides in the cytosol. It carries out the reaction 2 L-arginine + 3 NADPH + 4 O2 + H(+) = 2 L-citrulline + 2 nitric oxide + 3 NADP(+) + 4 H2O. Not stimulated by calcium/calmodulin. Aspirin inhibits expression and function of this enzyme and effects may be exerted at the level of translational/post-translational modification and directly on the catalytic activity. Its function is as follows. Produces nitric oxide (NO) which is a messenger molecule with diverse functions throughout the body. In macrophages, NO mediates tumoricidal and bactericidal actions. Also has nitrosylase activity and mediates cysteine S-nitrosylation of cytoplasmic target proteins such PTGS2/COX2. As component of the iNOS-S100A8/9 transnitrosylase complex involved in the selective inflammatory stimulus-dependent S-nitrosylation of GAPDH implicated in regulation of the GAIT complex activity and probably multiple targets including ANXA5, EZR, MSN and VIM. Involved in inflammation, enhances the synthesis of pro-inflammatory mediators such as IL6 and IL8. The protein is Nitric oxide synthase, inducible (Nos2) of Mus musculus (Mouse).